A 389-amino-acid polypeptide reads, in one-letter code: Galactokinase (389 aa).

Residue 34-37 (EHTD) coordinates substrate. Residues Ser68 and 125-131 (GSGLSSS) contribute to the ATP site. 2 residues coordinate Mg(2+): Ser131 and Glu163. The active-site Proton acceptor is Asp175. Tyr225 contacts substrate.

It belongs to the GHMP kinase family. GalK subfamily.

The protein resides in the cytoplasm. The enzyme catalyses alpha-D-galactose + ATP = alpha-D-galactose 1-phosphate + ADP + H(+). The protein operates within carbohydrate metabolism; galactose metabolism. Catalyzes the transfer of the gamma-phosphate of ATP to D-galactose to form alpha-D-galactose-1-phosphate (Gal-1-P). The chain is Galactokinase from Clostridium acetobutylicum (strain ATCC 824 / DSM 792 / JCM 1419 / IAM 19013 / LMG 5710 / NBRC 13948 / NRRL B-527 / VKM B-1787 / 2291 / W).